The primary structure comprises 240 residues: Ribonuclease 3 (240 aa).

In terms of domain architecture, RNase III spans 10-136; sequence VREFQETVGV…LIGAVYLDRG (127 aa). A Mg(2+)-binding site is contributed by E49. The active site involves D53. The Mg(2+) site is built by D122 and E125. E125 is an active-site residue. The DRBM domain occupies 163 to 231; the sequence is DWKTSLQELT…AESAWKAIRA (69 aa). Positions 205–240 are disordered; it reads TYGSGEGRSKKEAEQQAAESAWKAIRAATEKAKQES. Positions 219-228 are enriched in low complexity; that stretch reads QQAAESAWKA.

The protein belongs to the ribonuclease III family. As to quaternary structure, homodimer. It depends on Mg(2+) as a cofactor.

Its subcellular location is the cytoplasm. The catalysed reaction is Endonucleolytic cleavage to 5'-phosphomonoester.. Functionally, digests double-stranded RNA. Involved in the processing of primary rRNA transcript to yield the immediate precursors to the large and small rRNAs (23S and 16S). Processes some mRNAs, and tRNAs when they are encoded in the rRNA operon. Processes pre-crRNA and tracrRNA of type II CRISPR loci if present in the organism. This Thermobifida fusca (strain YX) protein is Ribonuclease 3.